The following is a 473-amino-acid chain: Ribosomal RNA small subunit methyltransferase F (473 aa).

S-adenosyl-L-methionine-binding positions include 124 to 130 (ASAPGSK), glutamate 148, aspartate 175, and aspartate 193. Catalysis depends on cysteine 246, which acts as the Nucleophile.

It belongs to the class I-like SAM-binding methyltransferase superfamily. RsmB/NOP family.

The protein resides in the cytoplasm. It carries out the reaction cytidine(1407) in 16S rRNA + S-adenosyl-L-methionine = 5-methylcytidine(1407) in 16S rRNA + S-adenosyl-L-homocysteine + H(+). In terms of biological role, specifically methylates the cytosine at position 1407 (m5C1407) of 16S rRNA. This chain is Ribosomal RNA small subunit methyltransferase F, found in Aliivibrio fischeri (strain ATCC 700601 / ES114) (Vibrio fischeri).